Reading from the N-terminus, the 700-residue chain is Calpain-2 catalytic subunit (700 aa).

A2 bears the N-acetylalanine mark. Residues 2–19 constitute a propeptide, anchors to the small subunit; the sequence is AGIAAKLAKDREAAEGLG. A Calpain catalytic domain is found at 45-344; the sequence is LFQDPSFPAL…YSRLEICNLT (300 aa). 2 residues coordinate Ca(2+): G91 and D96. Residue C105 is part of the active site. The Ca(2+) site is built by E175, Q229, and K230. Residues H262 and N286 contribute to the active site. Ca(2+) contacts are provided by E292, D299, and E323. The interval 345 to 514 is domain III; sequence PDTLTSDSYK…KKADYQVVDD (170 aa). The tract at residues 515-529 is linker; that stretch reads EIEANIDEIDISEDD. The tract at residues 530 to 700 is domain IV; sequence IDDGFRRLFA…LISWLSFSVL (171 aa). 16 residues coordinate Ca(2+): A542, D545, E547, E552, D585, D587, S589, K591, E596, D615, D617, S619, T621, E626, D658, and N661. 3 consecutive EF-hand domains span residues 572 to 597, 602 to 637, and 652 to 672; these read FSIE…LKEF, TKIQ…AGFK, and DDDL…LETL.

This sequence belongs to the peptidase C2 family. Forms a heterodimer with a small (regulatory) subunit (CAPNS1). Interacts with CPEB3; this leads to cleavage of CPEB3. Requires Ca(2+) as cofactor. Ubiquitous.

Its subcellular location is the cytoplasm. The protein localises to the cell membrane. It carries out the reaction Broad endopeptidase specificity.. Activated by 200-1000 micromolar concentrations of calcium and inhibited by calpastatin. Functionally, calcium-regulated non-lysosomal thiol-protease which catalyzes limited proteolysis of substrates involved in cytoskeletal remodeling and signal transduction. Proteolytically cleaves MYOC at 'Arg-226'. Proteolytically cleaves CPEB3 following neuronal stimulation which abolishes CPEB3 translational repressor activity, leading to translation of CPEB3 target mRNAs. The polypeptide is Calpain-2 catalytic subunit (CAPN2) (Bos taurus (Bovine)).